Here is a 361-residue protein sequence, read N- to C-terminus: Microtubule-associated protein Jupiter (361 aa).

Positions 1-15 (MISNYDITDSKSSSK) are enriched in polar residues. Disordered regions lie at residues 1 to 38 (MISN…TPRN) and 70 to 99 (IGDN…TPGK). Ser24 is subject to Phosphoserine. Residue Thr35 is modified to Phosphothreonine. Positions 73-87 (NPRRGQKPVDSHSRL) are enriched in basic and acidic residues. Position 96 is a phosphothreonine (Thr96). The residue at position 105 (Ser105) is a Phosphoserine. Composition is skewed to low complexity over residues 125–134 (GSSTANTTNG) and 141–154 (SGSV…VSSS). 2 disordered regions span residues 125–165 (GSST…SGSR) and 328–361 (GSTN…SGLW). Phosphoserine is present on residues Ser143 and Ser154. Positions 155 to 165 (TENLKMNSGSR) are enriched in polar residues.

It belongs to the MAP Jupiter family.

The protein localises to the nucleus. The protein resides in the cytoplasm. Its subcellular location is the cytoskeleton. It localises to the spindle. In terms of biological role, binds to all microtubule populations. The sequence is that of Microtubule-associated protein Jupiter from Drosophila persimilis (Fruit fly).